Consider the following 137-residue polypeptide: MRHGKAHRKLGRTSAHRTAMFANMSASLIKHEQIVTTLPKAKELRPFVEKLVTLAKRGDLHARRQAISIVRDVEQVGKLFAAIGPRYKERQGGYIRVLKAGFRYGDNAPLAVIEFVDRDVSAKGKDSGPVYSNDSDD.

The protein belongs to the bacterial ribosomal protein bL17 family. As to quaternary structure, part of the 50S ribosomal subunit. Contacts protein L32.

The sequence is that of Large ribosomal subunit protein bL17 from Caulobacter sp. (strain K31).